We begin with the raw amino-acid sequence, 189 residues long: Elongation factor P (189 aa).

The protein belongs to the elongation factor P family.

The protein resides in the cytoplasm. Its pathway is protein biosynthesis; polypeptide chain elongation. Functionally, involved in peptide bond synthesis. Stimulates efficient translation and peptide-bond synthesis on native or reconstituted 70S ribosomes in vitro. Probably functions indirectly by altering the affinity of the ribosome for aminoacyl-tRNA, thus increasing their reactivity as acceptors for peptidyl transferase. In Rhizobium meliloti (strain 1021) (Ensifer meliloti), this protein is Elongation factor P.